We begin with the raw amino-acid sequence, 284 residues long: Probable protein phosphatase 2C 41 (284 aa).

The PPM-type phosphatase domain occupies 35-282; it reads SYGFYLVRGM…DDISCVVVRF (248 aa). Mn(2+) is bound by residues Asp72, Gly73, Asp234, and Asp273.

This sequence belongs to the PP2C family. It depends on Mg(2+) as a cofactor. The cofactor is Mn(2+).

It catalyses the reaction O-phospho-L-seryl-[protein] + H2O = L-seryl-[protein] + phosphate. The enzyme catalyses O-phospho-L-threonyl-[protein] + H2O = L-threonyl-[protein] + phosphate. This Oryza sativa subsp. japonica (Rice) protein is Probable protein phosphatase 2C 41.